The sequence spans 536 residues: Phosphoenolpyruvate carboxykinase (ATP) (536 aa).

The substrate site is built by Arg-61, Tyr-195, and Lys-201. Residues Lys-201, His-220, and 236 to 244 contribute to the ATP site; that span reads GLSGTGKTT. Mn(2+) contacts are provided by Lys-201 and His-220. Asp-257 provides a ligand contact to Mn(2+). ATP is bound by residues Glu-285, Arg-322, and Thr-447. Arg-322 contributes to the substrate binding site.

This sequence belongs to the phosphoenolpyruvate carboxykinase (ATP) family. Requires Mn(2+) as cofactor.

The protein resides in the cytoplasm. It catalyses the reaction oxaloacetate + ATP = phosphoenolpyruvate + ADP + CO2. It functions in the pathway carbohydrate biosynthesis; gluconeogenesis. In terms of biological role, involved in the gluconeogenesis. Catalyzes the conversion of oxaloacetate (OAA) to phosphoenolpyruvate (PEP) through direct phosphoryl transfer between the nucleoside triphosphate and OAA. The protein is Phosphoenolpyruvate carboxykinase (ATP) of Rhizobium meliloti (strain 1021) (Ensifer meliloti).